Here is a 64-residue protein sequence, read N- to C-terminus: Metallothionein (64 aa).

This sequence belongs to the metallothionein superfamily. Type 4 family.

In terms of biological role, metallothioneins have a high content of cysteine residues that bind various heavy metals. This Sterechinus neumayeri (Antarctic sea urchin) protein is Metallothionein.